We begin with the raw amino-acid sequence, 304 residues long: Ornithine carbamoyltransferase (304 aa).

Carbamoyl phosphate is bound by residues 47–50 (STRT), arginine 98, and 125–128 (HPCQ). L-ornithine-binding positions include asparagine 156, aspartate 221, and 225–226 (SM). Residues 262–263 (CL) and arginine 290 contribute to the carbamoyl phosphate site.

This sequence belongs to the aspartate/ornithine carbamoyltransferase superfamily. OTCase family.

The protein localises to the cytoplasm. The catalysed reaction is carbamoyl phosphate + L-ornithine = L-citrulline + phosphate + H(+). It functions in the pathway amino-acid biosynthesis; L-arginine biosynthesis; L-arginine from L-ornithine and carbamoyl phosphate: step 1/3. Its function is as follows. Reversibly catalyzes the transfer of the carbamoyl group from carbamoyl phosphate (CP) to the N(epsilon) atom of ornithine (ORN) to produce L-citrulline. This is Ornithine carbamoyltransferase from Methanococcus aeolicus (strain ATCC BAA-1280 / DSM 17508 / OCM 812 / Nankai-3).